The primary structure comprises 357 residues: Phosphoribosylformylglycinamidine cyclo-ligase (357 aa).

It belongs to the AIR synthase family.

It localises to the cytoplasm. The catalysed reaction is 2-formamido-N(1)-(5-O-phospho-beta-D-ribosyl)acetamidine + ATP = 5-amino-1-(5-phospho-beta-D-ribosyl)imidazole + ADP + phosphate + H(+). The protein operates within purine metabolism; IMP biosynthesis via de novo pathway; 5-amino-1-(5-phospho-D-ribosyl)imidazole from N(2)-formyl-N(1)-(5-phospho-D-ribosyl)glycinamide: step 2/2. The sequence is that of Phosphoribosylformylglycinamidine cyclo-ligase from Allorhizobium ampelinum (strain ATCC BAA-846 / DSM 112012 / S4) (Agrobacterium vitis (strain S4)).